Here is a 69-residue protein sequence, read N- to C-terminus: uncharacterized protein (69 aa).

This is an uncharacterized protein from Bacillus anthracis.